The primary structure comprises 160 residues: Cyclic pyranopterin monophosphate synthase (160 aa).

Substrate is bound by residues 75–77 (LCH) and 113–114 (ME). Asp-128 is a catalytic residue.

It belongs to the MoaC family. As to quaternary structure, homohexamer; trimer of dimers.

It carries out the reaction (8S)-3',8-cyclo-7,8-dihydroguanosine 5'-triphosphate = cyclic pyranopterin phosphate + diphosphate. The protein operates within cofactor biosynthesis; molybdopterin biosynthesis. Its function is as follows. Catalyzes the conversion of (8S)-3',8-cyclo-7,8-dihydroguanosine 5'-triphosphate to cyclic pyranopterin monophosphate (cPMP). This is Cyclic pyranopterin monophosphate synthase from Sodalis glossinidius (strain morsitans).